Consider the following 309-residue polypeptide: Protein FdhE homolog (309 aa).

It belongs to the FdhE family.

It localises to the cytoplasm. Necessary for formate dehydrogenase activity. The sequence is that of Protein FdhE homolog from Yersinia pestis bv. Antiqua (strain Antiqua).